The primary structure comprises 200 residues: MARTAHIVRQTSESSIDLELNLDGTGKTNIETTVPFYNHMMTALGKHSLIDLNIVASGDTDIDAHHTVEDTAIVFGEALRQALGDKRGIRRFADATVPLDEALAKAVVDVSGRPYCVCSGEPEGFQYAMIGGHFTGSLVRHVMESIAFHAQICLHMHLIAGRDPHHIAEAEFKALARALRFAIEPDPRIQGLIPSTKGAL.

The protein belongs to the imidazoleglycerol-phosphate dehydratase family.

Its subcellular location is the cytoplasm. It carries out the reaction D-erythro-1-(imidazol-4-yl)glycerol 3-phosphate = 3-(imidazol-4-yl)-2-oxopropyl phosphate + H2O. The protein operates within amino-acid biosynthesis; L-histidine biosynthesis; L-histidine from 5-phospho-alpha-D-ribose 1-diphosphate: step 6/9. The chain is Imidazoleglycerol-phosphate dehydratase from Bifidobacterium animalis subsp. lactis (strain AD011).